A 269-amino-acid chain; its full sequence is Shikimate dehydrogenase (NADP(+)) (269 aa).

Shikimate contacts are provided by residues 17–19 (SKS) and Thr64. Catalysis depends on Lys68, which acts as the Proton acceptor. Asp80 contributes to the NADP(+) binding site. The shikimate site is built by Asn89 and Asp105. NADP(+) contacts are provided by residues 130–134 (GAGGA), 154–159 (NRTRAK), and Met213. Residue Tyr215 coordinates shikimate. Gly237 provides a ligand contact to NADP(+).

The protein belongs to the shikimate dehydrogenase family. Homodimer.

It carries out the reaction shikimate + NADP(+) = 3-dehydroshikimate + NADPH + H(+). The protein operates within metabolic intermediate biosynthesis; chorismate biosynthesis; chorismate from D-erythrose 4-phosphate and phosphoenolpyruvate: step 4/7. In terms of biological role, involved in the biosynthesis of the chorismate, which leads to the biosynthesis of aromatic amino acids. Catalyzes the reversible NADPH linked reduction of 3-dehydroshikimate (DHSA) to yield shikimate (SA). The sequence is that of Shikimate dehydrogenase (NADP(+)) from Neisseria gonorrhoeae (strain ATCC 700825 / FA 1090).